Here is a 260-residue protein sequence, read N- to C-terminus: Methionine-rich nacre protein (260 aa).

The first 19 residues, 1–19 (MRRILCLAVVIFIINDVSS), serve as a signal peptide directing secretion. The tract at residues 23–75 (GSNKNWKKSGMSLSSPGNKKPTGNNNAVPQKSKMNNVNQNSLSQPKRPSHPGN) is disordered. Positions 33 to 68 (MSLSSPGNKKPTGNNNAVPQKSKMNNVNQNSLSQPK) are enriched in polar residues.

As to expression, expressed in mantle distal zone, mantle margin and grafted pearl pockets. Not expressed in adductor muscle, gills, hemocytes or ungrafted pearl pockets. Within the mantle, specifically expressed in mineralizing outer epithelium cells (at protein level). After secretion incorporated into acid-insoluble nacre matrix of shell and pearl (at protein level). Not found in acid-insoluble matrix of shell prisms (at protein level).

It localises to the secreted. This chain is Methionine-rich nacre protein, found in Margaritifera margaritifera (Freshwater pearl mussel).